Consider the following 111-residue polypeptide: Large ribosomal subunit protein uL22 (111 aa).

It belongs to the universal ribosomal protein uL22 family. As to quaternary structure, part of the 50S ribosomal subunit.

Functionally, this protein binds specifically to 23S rRNA; its binding is stimulated by other ribosomal proteins, e.g. L4, L17, and L20. It is important during the early stages of 50S assembly. It makes multiple contacts with different domains of the 23S rRNA in the assembled 50S subunit and ribosome. In terms of biological role, the globular domain of the protein is located near the polypeptide exit tunnel on the outside of the subunit, while an extended beta-hairpin is found that lines the wall of the exit tunnel in the center of the 70S ribosome. This Chlamydia abortus (strain DSM 27085 / S26/3) (Chlamydophila abortus) protein is Large ribosomal subunit protein uL22.